A 398-amino-acid chain; its full sequence is MQYLTILGSTGSIGRSTLDIVRRHPDRFAVTALTANQGVAQMMSDCLEFHPSYAVMADEASAIALKEALAGHKLKTEVLTGTDALCQVAAHSSVDIVMAAIVGAAGLLPAMAAIKKGKTVLLANKEALVMSGRLFMDAAHHYSARILPVDSEHNAIFQCLPAEAQSALGNCDLSAAGVDKILLTGSGGPFRYTSLSQLSSVTPEQAVAHPNWSMGRKISVDSATMMNKGLEFIEAKWLFNATEEQIQVIIHPQSVIHSMVQYRDGSVLAQMGQPDMRTPIAHALGFPERVASGVSPLDFSRVGELSFLPVDFERYPCLKLAIEACWAGQGATTALNAANEIAVDAFLSGKIGFTQIHTVVLDVLSELKQANINDLESILAIDAEARLMAHQKITRLAV.

NADPH-binding residues include T10, G11, S12, I13, and N124. A 1-deoxy-D-xylulose 5-phosphate-binding site is contributed by K125. E126 contacts NADPH. A Mn(2+)-binding site is contributed by D150. 1-deoxy-D-xylulose 5-phosphate is bound by residues S151, E152, S186, and H209. E152 serves as a coordination point for Mn(2+). Position 215 (G215) interacts with NADPH. 4 residues coordinate 1-deoxy-D-xylulose 5-phosphate: S222, N227, K228, and E231. E231 is a Mn(2+) binding site.

Belongs to the DXR family. It depends on Mg(2+) as a cofactor. The cofactor is Mn(2+).

It catalyses the reaction 2-C-methyl-D-erythritol 4-phosphate + NADP(+) = 1-deoxy-D-xylulose 5-phosphate + NADPH + H(+). It participates in isoprenoid biosynthesis; isopentenyl diphosphate biosynthesis via DXP pathway; isopentenyl diphosphate from 1-deoxy-D-xylulose 5-phosphate: step 1/6. Catalyzes the NADPH-dependent rearrangement and reduction of 1-deoxy-D-xylulose-5-phosphate (DXP) to 2-C-methyl-D-erythritol 4-phosphate (MEP). This chain is 1-deoxy-D-xylulose 5-phosphate reductoisomerase, found in Tolumonas auensis (strain DSM 9187 / NBRC 110442 / TA 4).